A 170-amino-acid polypeptide reads, in one-letter code: Shikimate kinase (170 aa).

11–16 (LSGKST) provides a ligand contact to ATP. Mg(2+) is bound at residue Ser-15. Asp-33, Arg-57, and Gly-79 together coordinate substrate. Position 119 (Arg-119) interacts with ATP. Position 137 (Arg-137) interacts with substrate.

The protein belongs to the shikimate kinase family. As to quaternary structure, monomer. The cofactor is Mg(2+).

It localises to the cytoplasm. The enzyme catalyses shikimate + ATP = 3-phosphoshikimate + ADP + H(+). It participates in metabolic intermediate biosynthesis; chorismate biosynthesis; chorismate from D-erythrose 4-phosphate and phosphoenolpyruvate: step 5/7. Functionally, catalyzes the specific phosphorylation of the 3-hydroxyl group of shikimic acid using ATP as a cosubstrate. This chain is Shikimate kinase, found in Clostridium botulinum (strain Loch Maree / Type A3).